A 345-amino-acid polypeptide reads, in one-letter code: Phenylalanine--tRNA ligase alpha subunit (345 aa).

Mg(2+) is bound at residue glutamate 253.

This sequence belongs to the class-II aminoacyl-tRNA synthetase family. Phe-tRNA synthetase alpha subunit type 1 subfamily. Tetramer of two alpha and two beta subunits. It depends on Mg(2+) as a cofactor.

The protein localises to the cytoplasm. The catalysed reaction is tRNA(Phe) + L-phenylalanine + ATP = L-phenylalanyl-tRNA(Phe) + AMP + diphosphate + H(+). This Nitratidesulfovibrio vulgaris (strain DP4) (Desulfovibrio vulgaris) protein is Phenylalanine--tRNA ligase alpha subunit.